We begin with the raw amino-acid sequence, 180 residues long: Shikimate kinase (180 aa).

An ATP-binding site is contributed by 14 to 19 (GAGKSS). Serine 18 provides a ligand contact to Mg(2+). Aspartate 36, arginine 60, and glycine 82 together coordinate substrate. Arginine 120 is an ATP binding site. Arginine 139 serves as a coordination point for substrate.

It belongs to the shikimate kinase family. As to quaternary structure, monomer. The cofactor is Mg(2+).

It is found in the cytoplasm. The catalysed reaction is shikimate + ATP = 3-phosphoshikimate + ADP + H(+). Its pathway is metabolic intermediate biosynthesis; chorismate biosynthesis; chorismate from D-erythrose 4-phosphate and phosphoenolpyruvate: step 5/7. Functionally, catalyzes the specific phosphorylation of the 3-hydroxyl group of shikimic acid using ATP as a cosubstrate. This is Shikimate kinase from Xylella fastidiosa (strain M12).